The following is a 729-amino-acid chain: DNA topoisomerase 3 (729 aa).

One can recognise a Toprim domain in the interval 3–136 (KSVVIAEKPS…IKRLWISSVT (134 aa)). Residues E9 and D105 each contribute to the Mg(2+) site. The 442-residue stretch at 153 to 594 (YDNLYASAVA…EMKNYTKEIV (442 aa)) folds into the Topo IA-type catalytic domain. The interval 187–192 (NCGRVQ) is interaction with DNA. Y310 acts as the O-(5'-phospho-DNA)-tyrosine intermediate in catalysis. The segment covering 686–713 (ERRKKESGNKADKRDVQKYMKQQKKEEE) has biased composition (basic and acidic residues). The tract at residues 686–718 (ERRKKESGNKADKRDVQKYMKQQKKEEEPLNNP) is disordered.

Belongs to the type IA topoisomerase family. Mg(2+) serves as cofactor.

It catalyses the reaction ATP-independent breakage of single-stranded DNA, followed by passage and rejoining.. Functionally, releases the supercoiling and torsional tension of DNA, which is introduced during the DNA replication and transcription, by transiently cleaving and rejoining one strand of the DNA duplex. Introduces a single-strand break via transesterification at a target site in duplex DNA. The scissile phosphodiester is attacked by the catalytic tyrosine of the enzyme, resulting in the formation of a DNA-(5'-phosphotyrosyl)-enzyme intermediate and the expulsion of a 3'-OH DNA strand. The free DNA strand then undergoes passage around the unbroken strand, thus removing DNA supercoils. Finally, in the religation step, the DNA 3'-OH attacks the covalent intermediate to expel the active-site tyrosine and restore the DNA phosphodiester backbone. This is DNA topoisomerase 3 from Bacillus thuringiensis subsp. konkukian (strain 97-27).